Here is a 336-residue protein sequence, read N- to C-terminus: MHASLASYAAAAMPALDLRPEIAHAHQPVMSPSHHGWDGNGATAVPTPMPKRLDGKVAIVTGGARGIGEAIVRLFAKHGARVVIADIDDAAGEALASALGPQVSFVRCDVSVEDDVRRAVDWALSRHGGRLDVYCNNAGVLGRQTRAARSILSFDAAEFDRVLRVNALGAALGMKHAARAMAPRRAGSIVSVASVAAVLGGLGPHAYTASKHAIVGLTKNAACELRAHGVRVNCVSPFGVATPMLINAWRQGHDDATADADRDLDLDLDVTVPSDQEVEKMEEVVRGLATLKGPTLRPRDIAEAVLFLASDEARYISGHNLVVDGGVTTSRNLIGL.

NAD(+) is bound at residue 59–83 (IVTGGARGIGEAIVRLFAKHGARVV). Ser-194 contacts substrate. The Proton acceptor role is filled by Tyr-207.

The protein belongs to the short-chain dehydrogenases/reductases (SDR) family.

Its function is as follows. Required for stage-specific floral organ abortion. This chain is Sex determination protein tasselseed-2 (TS2), found in Zea mays (Maize).